The chain runs to 218 residues: Probable nicotinate-nucleotide adenylyltransferase (218 aa).

It belongs to the NadD family.

The catalysed reaction is nicotinate beta-D-ribonucleotide + ATP + H(+) = deamido-NAD(+) + diphosphate. The protein operates within cofactor biosynthesis; NAD(+) biosynthesis; deamido-NAD(+) from nicotinate D-ribonucleotide: step 1/1. In terms of biological role, catalyzes the reversible adenylation of nicotinate mononucleotide (NaMN) to nicotinic acid adenine dinucleotide (NaAD). This chain is Probable nicotinate-nucleotide adenylyltransferase, found in Syntrophotalea carbinolica (strain DSM 2380 / NBRC 103641 / GraBd1) (Pelobacter carbinolicus).